Reading from the N-terminus, the 79-residue chain is Conotoxin ArMSGL-0122 (79 aa).

Residues M1 to S20 form the signal peptide. The propeptide occupies H21–T44. 3 cysteine pairs are disulfide-bonded: C52–C64, C56–C73, and C63–C77. L78 carries the post-translational modification Leucine amide.

It belongs to the conotoxin O3 superfamily. Expressed by the venom duct.

The protein resides in the secreted. This is Conotoxin ArMSGL-0122 from Conus arenatus (Sand-dusted cone).